Here is a 449-residue protein sequence, read N- to C-terminus: Phosphoglucosamine mutase (449 aa).

S104 (phosphoserine intermediate) is an active-site residue. Mg(2+) is bound by residues S104, D243, D245, and D247. At S104 the chain carries Phosphoserine.

It belongs to the phosphohexose mutase family. It depends on Mg(2+) as a cofactor. Post-translationally, activated by phosphorylation.

It carries out the reaction alpha-D-glucosamine 1-phosphate = D-glucosamine 6-phosphate. Functionally, catalyzes the conversion of glucosamine-6-phosphate to glucosamine-1-phosphate. The polypeptide is Phosphoglucosamine mutase (Xanthomonas euvesicatoria pv. vesicatoria (strain 85-10) (Xanthomonas campestris pv. vesicatoria)).